The primary structure comprises 701 residues: Elongation factor G (701 aa).

The tr-type G domain maps to 8–290 (SLYRNIGISA…AVVELLPAPT (283 aa)). Residues 17-24 (AHIDAGKT), 88-92 (DTPGH), and 142-145 (NKMD) contribute to the GTP site.

It belongs to the TRAFAC class translation factor GTPase superfamily. Classic translation factor GTPase family. EF-G/EF-2 subfamily.

It localises to the cytoplasm. Catalyzes the GTP-dependent ribosomal translocation step during translation elongation. During this step, the ribosome changes from the pre-translocational (PRE) to the post-translocational (POST) state as the newly formed A-site-bound peptidyl-tRNA and P-site-bound deacylated tRNA move to the P and E sites, respectively. Catalyzes the coordinated movement of the two tRNA molecules, the mRNA and conformational changes in the ribosome. The sequence is that of Elongation factor G from Neisseria meningitidis serogroup B (strain ATCC BAA-335 / MC58).